A 386-amino-acid chain; its full sequence is 3-hydroxyisobutyryl-CoA hydrolase, mitochondrial (386 aa).

Residues 1 to 32 constitute a mitochondrion transit peptide; sequence MGLQGLCRLMSRFNSYKRTNIILQHLKMSNHT. At Lys92 the chain carries N6-acetyllysine; alternate. N6-succinyllysine; alternate is present on Lys92. Positions 121, 146, 169, and 177 each coordinate substrate. N6-acetyllysine; alternate is present on Lys221. An N6-succinyllysine; alternate modification is found at Lys221. Phosphoserine is present on Ser234. N6-succinyllysine is present on residues Lys250 and Lys257. Lys297 is modified (N6-acetyllysine; alternate). Lys297 is subject to N6-succinyllysine; alternate. N6-succinyllysine is present on Lys301. Lys353 bears the N6-acetyllysine; alternate mark. Lys353 is subject to N6-succinyllysine; alternate. Ser356 is subject to Phosphoserine. N6-acetyllysine occurs at positions 360 and 365. Lys377 carries the post-translational modification N6-succinyllysine.

This sequence belongs to the enoyl-CoA hydratase/isomerase family.

It localises to the mitochondrion. The catalysed reaction is 3-hydroxy-2-methylpropanoyl-CoA + H2O = 3-hydroxy-2-methylpropanoate + CoA + H(+). The protein operates within amino-acid degradation; L-valine degradation. Functionally, hydrolyzes 3-hydroxyisobutyryl-CoA (HIBYL-CoA), a saline catabolite. Has high activity toward isobutyryl-CoA. Could be an isobutyryl-CoA dehydrogenase that functions in valine catabolism. Also hydrolyzes 3-hydroxypropanoyl-CoA. The protein is 3-hydroxyisobutyryl-CoA hydrolase, mitochondrial (HIBCH) of Bos taurus (Bovine).